The sequence spans 131 residues: D-ribose pyranase (131 aa).

His20 functions as the Proton donor in the catalytic mechanism. Residues Asp28, His98, and 120 to 122 contribute to the substrate site; that span reads YCN.

This sequence belongs to the RbsD / FucU family. RbsD subfamily. As to quaternary structure, homodecamer.

The protein resides in the cytoplasm. It catalyses the reaction beta-D-ribopyranose = beta-D-ribofuranose. Its pathway is carbohydrate metabolism; D-ribose degradation; D-ribose 5-phosphate from beta-D-ribopyranose: step 1/2. Catalyzes the interconversion of beta-pyran and beta-furan forms of D-ribose. The protein is D-ribose pyranase of Coprothermobacter proteolyticus (strain ATCC 35245 / DSM 5265 / OCM 4 / BT).